The sequence spans 116 residues: Large ribosomal subunit protein bL19 (116 aa).

The protein belongs to the bacterial ribosomal protein bL19 family.

Its function is as follows. This protein is located at the 30S-50S ribosomal subunit interface and may play a role in the structure and function of the aminoacyl-tRNA binding site. The chain is Large ribosomal subunit protein bL19 from Streptomyces griseus subsp. griseus (strain JCM 4626 / CBS 651.72 / NBRC 13350 / KCC S-0626 / ISP 5235).